Reading from the N-terminus, the 288-residue chain is UDP-3-O-acyl-N-acetylglucosamine deacetylase (288 aa).

The Zn(2+) site is built by His79, His236, and Asp240. Catalysis depends on His263, which acts as the Proton donor.

The protein belongs to the LpxC family. Zn(2+) is required as a cofactor.

The enzyme catalyses a UDP-3-O-[(3R)-3-hydroxyacyl]-N-acetyl-alpha-D-glucosamine + H2O = a UDP-3-O-[(3R)-3-hydroxyacyl]-alpha-D-glucosamine + acetate. Its pathway is glycolipid biosynthesis; lipid IV(A) biosynthesis; lipid IV(A) from (3R)-3-hydroxytetradecanoyl-[acyl-carrier-protein] and UDP-N-acetyl-alpha-D-glucosamine: step 2/6. In terms of biological role, catalyzes the hydrolysis of UDP-3-O-myristoyl-N-acetylglucosamine to form UDP-3-O-myristoylglucosamine and acetate, the committed step in lipid A biosynthesis. The sequence is that of UDP-3-O-acyl-N-acetylglucosamine deacetylase from Rickettsia prowazekii (strain Madrid E).